The following is a 278-amino-acid chain: Tryptophan synthase alpha chain (278 aa).

Catalysis depends on proton acceptor residues E49 and D60.

Belongs to the TrpA family. Tetramer of two alpha and two beta chains.

It catalyses the reaction (1S,2R)-1-C-(indol-3-yl)glycerol 3-phosphate + L-serine = D-glyceraldehyde 3-phosphate + L-tryptophan + H2O. It participates in amino-acid biosynthesis; L-tryptophan biosynthesis; L-tryptophan from chorismate: step 5/5. In terms of biological role, the alpha subunit is responsible for the aldol cleavage of indoleglycerol phosphate to indole and glyceraldehyde 3-phosphate. The chain is Tryptophan synthase alpha chain from Rhodopirellula baltica (strain DSM 10527 / NCIMB 13988 / SH1).